A 434-amino-acid chain; its full sequence is UDP-N-acetylglucosamine 1-carboxyvinyltransferase 1 (434 aa).

Lysine 22–asparagine 23 contacts phosphoenolpyruvate. Arginine 93 provides a ligand contact to UDP-N-acetyl-alpha-D-glucosamine. The active-site Proton donor is cysteine 117. Cysteine 117 bears the 2-(S-cysteinyl)pyruvic acid O-phosphothioketal mark. Residues arginine 122–glutamine 126, aspartate 306, and valine 328 each bind UDP-N-acetyl-alpha-D-glucosamine.

It belongs to the EPSP synthase family. MurA subfamily.

The protein resides in the cytoplasm. It catalyses the reaction phosphoenolpyruvate + UDP-N-acetyl-alpha-D-glucosamine = UDP-N-acetyl-3-O-(1-carboxyvinyl)-alpha-D-glucosamine + phosphate. The protein operates within cell wall biogenesis; peptidoglycan biosynthesis. Cell wall formation. Adds enolpyruvyl to UDP-N-acetylglucosamine. The sequence is that of UDP-N-acetylglucosamine 1-carboxyvinyltransferase 1 from Bacillus cereus (strain ATCC 10987 / NRS 248).